The chain runs to 492 residues: N-succinylglutamate 5-semialdehyde dehydrogenase (492 aa).

Residue 220-225 (GSANTG) participates in NAD(+) binding. Residues Glu-243 and Cys-277 contribute to the active site.

Belongs to the aldehyde dehydrogenase family. AstD subfamily.

The enzyme catalyses N-succinyl-L-glutamate 5-semialdehyde + NAD(+) + H2O = N-succinyl-L-glutamate + NADH + 2 H(+). It participates in amino-acid degradation; L-arginine degradation via AST pathway; L-glutamate and succinate from L-arginine: step 4/5. Its function is as follows. Catalyzes the NAD-dependent reduction of succinylglutamate semialdehyde into succinylglutamate. The sequence is that of N-succinylglutamate 5-semialdehyde dehydrogenase from Escherichia fergusonii (strain ATCC 35469 / DSM 13698 / CCUG 18766 / IAM 14443 / JCM 21226 / LMG 7866 / NBRC 102419 / NCTC 12128 / CDC 0568-73).